The sequence spans 114 residues: MARVTVEDCVDKVPNRFDLVLLAAQRAREISGGAEMTIDRDRDKNPVVALREIAEQTIKPKDLQEAVVTNLQKILPDDDDEFDEVGSLSQSAEALRITASAPTRSTSIGADFDG.

This sequence belongs to the RNA polymerase subunit omega family. The RNAP catalytic core consists of 2 alpha, 1 beta, 1 beta' and 1 omega subunit. When a sigma factor is associated with the core the holoenzyme is formed, which can initiate transcription.

The enzyme catalyses RNA(n) + a ribonucleoside 5'-triphosphate = RNA(n+1) + diphosphate. Functionally, promotes RNA polymerase assembly. Latches the N- and C-terminal regions of the beta' subunit thereby facilitating its interaction with the beta and alpha subunits. This Erythrobacter litoralis (strain HTCC2594) protein is DNA-directed RNA polymerase subunit omega.